The chain runs to 416 residues: UDP-N-acetylglucosamine 1-carboxyvinyltransferase (416 aa).

A phosphoenolpyruvate-binding site is contributed by 22–23; that stretch reads KN. UDP-N-acetyl-alpha-D-glucosamine is bound at residue Arg92. Residue Cys116 is the Proton donor of the active site. Cys116 bears the 2-(S-cysteinyl)pyruvic acid O-phosphothioketal mark. UDP-N-acetyl-alpha-D-glucosamine contacts are provided by residues 121–125, Asp304, and Ile326; that span reads RPIDQ.

Belongs to the EPSP synthase family. MurA subfamily.

The protein localises to the cytoplasm. It carries out the reaction phosphoenolpyruvate + UDP-N-acetyl-alpha-D-glucosamine = UDP-N-acetyl-3-O-(1-carboxyvinyl)-alpha-D-glucosamine + phosphate. It participates in cell wall biogenesis; peptidoglycan biosynthesis. Cell wall formation. Adds enolpyruvyl to UDP-N-acetylglucosamine. The chain is UDP-N-acetylglucosamine 1-carboxyvinyltransferase from Desulfatibacillum aliphaticivorans.